Here is a 504-residue protein sequence, read N- to C-terminus: Heat shock 70 kDa protein 14 (504 aa).

This sequence belongs to the heat shock protein 70 family. Component of ribosome-associated complex (RAC).

It localises to the cytoplasm. Its subcellular location is the cytosol. Functionally, component of the ribosome-associated complex (RAC), a complex involved in folding or maintaining nascent polypeptides in a folding-competent state. The polypeptide is Heat shock 70 kDa protein 14 (hspa14) (Danio rerio (Zebrafish)).